A 109-amino-acid chain; its full sequence is Nucleoid-associated protein A1S_1684 (109 aa).

It belongs to the YbaB/EbfC family. Homodimer.

Its subcellular location is the cytoplasm. It is found in the nucleoid. Binds to DNA and alters its conformation. May be involved in regulation of gene expression, nucleoid organization and DNA protection. The sequence is that of Nucleoid-associated protein A1S_1684 from Acinetobacter baumannii (strain ATCC 17978 / DSM 105126 / CIP 53.77 / LMG 1025 / NCDC KC755 / 5377).